A 344-amino-acid chain; its full sequence is Heat-inducible transcription repressor HrcA (344 aa).

The protein belongs to the HrcA family.

Negative regulator of class I heat shock genes (grpE-dnaK-dnaJ and groELS operons). Prevents heat-shock induction of these operons. The protein is Heat-inducible transcription repressor HrcA of Streptococcus sanguinis (strain SK36).